The following is a 115-amino-acid chain: Promotilin (115 aa).

A signal peptide spans 1–25 (MLSRKATAILLVVHAAAMLASQTEG). The segment at 43–73 (RYKGQKKSLSVQQRSEEVGPVDPAEPREEKQ) is disordered.

Belongs to the motilin family.

Its subcellular location is the secreted. Plays an important role in the regulation of interdigestive gastrointestinal motility and indirectly causes rhythmic contraction of duodenal and colonic smooth muscle. In Ovis aries (Sheep), this protein is Promotilin (MLN).